Consider the following 194-residue polypeptide: Large ribosomal subunit protein eL15 (194 aa).

The disordered stretch occupies residues 158 to 194; the sequence is ANRGLTSAGKKGRGLMYKGKGAEKARPGVRANGKKTK.

Belongs to the eukaryotic ribosomal protein eL15 family.

This is Large ribosomal subunit protein eL15 from Methanococcus maripaludis (strain DSM 14266 / JCM 13030 / NBRC 101832 / S2 / LL).